Reading from the N-terminus, the 122-residue chain is Large ribosomal subunit protein uL14 (122 aa).

The protein belongs to the universal ribosomal protein uL14 family. Part of the 50S ribosomal subunit. Forms a cluster with proteins L3 and L19. In the 70S ribosome, L14 and L19 interact and together make contacts with the 16S rRNA in bridges B5 and B8.

Binds to 23S rRNA. Forms part of two intersubunit bridges in the 70S ribosome. This is Large ribosomal subunit protein uL14 from Ligilactobacillus salivarius (strain UCC118) (Lactobacillus salivarius).